Reading from the N-terminus, the 372-residue chain is Peptide chain release factor 2 (372 aa).

Glutamine 253 is subject to N5-methylglutamine.

Belongs to the prokaryotic/mitochondrial release factor family. Post-translationally, methylated by PrmC. Methylation increases the termination efficiency of RF2.

The protein localises to the cytoplasm. Functionally, peptide chain release factor 2 directs the termination of translation in response to the peptide chain termination codons UGA and UAA. This chain is Peptide chain release factor 2, found in Mycolicibacterium gilvum (strain PYR-GCK) (Mycobacterium gilvum (strain PYR-GCK)).